The primary structure comprises 521 residues: Maturase K (521 aa).

It belongs to the intron maturase 2 family. MatK subfamily.

Its subcellular location is the plastid. It is found in the chloroplast. In terms of biological role, usually encoded in the trnK tRNA gene intron. Probably assists in splicing its own and other chloroplast group II introns. The polypeptide is Maturase K (Trillium erectum (Beth root)).